Reading from the N-terminus, the 121-residue chain is Small ribosomal subunit protein uS13 (121 aa).

The tract at residues 93–121 is disordered; it reads RGLPVRGQNTKNNARTRKGPRRTVANKKK. Positions 106 to 121 are enriched in basic residues; it reads ARTRKGPRRTVANKKK.

Belongs to the universal ribosomal protein uS13 family. Part of the 30S ribosomal subunit. Forms a loose heterodimer with protein S19. Forms two bridges to the 50S subunit in the 70S ribosome.

In terms of biological role, located at the top of the head of the 30S subunit, it contacts several helices of the 16S rRNA. In the 70S ribosome it contacts the 23S rRNA (bridge B1a) and protein L5 of the 50S subunit (bridge B1b), connecting the 2 subunits; these bridges are implicated in subunit movement. Contacts the tRNAs in the A and P-sites. The chain is Small ribosomal subunit protein uS13 from Bacillus licheniformis (strain ATCC 14580 / DSM 13 / JCM 2505 / CCUG 7422 / NBRC 12200 / NCIMB 9375 / NCTC 10341 / NRRL NRS-1264 / Gibson 46).